Reading from the N-terminus, the 492-residue chain is Glutamyl-tRNA(Gln) amidotransferase subunit A (492 aa).

Catalysis depends on charge relay system residues Lys-78 and Ser-158. The active-site Acyl-ester intermediate is the Ser-182.

The protein belongs to the amidase family. GatA subfamily. Heterotrimer of A, B and C subunits.

The enzyme catalyses L-glutamyl-tRNA(Gln) + L-glutamine + ATP + H2O = L-glutaminyl-tRNA(Gln) + L-glutamate + ADP + phosphate + H(+). Its function is as follows. Allows the formation of correctly charged Gln-tRNA(Gln) through the transamidation of misacylated Glu-tRNA(Gln) in organisms which lack glutaminyl-tRNA synthetase. The reaction takes place in the presence of glutamine and ATP through an activated gamma-phospho-Glu-tRNA(Gln). The sequence is that of Glutamyl-tRNA(Gln) amidotransferase subunit A from Zymomonas mobilis subsp. mobilis (strain ATCC 31821 / ZM4 / CP4).